The sequence spans 318 residues: Transaldolase (318 aa).

Lysine 132 acts as the Schiff-base intermediate with substrate in catalysis.

The protein belongs to the transaldolase family. Type 1 subfamily. In terms of assembly, homodimer.

It is found in the cytoplasm. The enzyme catalyses D-sedoheptulose 7-phosphate + D-glyceraldehyde 3-phosphate = D-erythrose 4-phosphate + beta-D-fructose 6-phosphate. Its pathway is carbohydrate degradation; pentose phosphate pathway; D-glyceraldehyde 3-phosphate and beta-D-fructose 6-phosphate from D-ribose 5-phosphate and D-xylulose 5-phosphate (non-oxidative stage): step 2/3. Functionally, transaldolase is important for the balance of metabolites in the pentose-phosphate pathway. This Shewanella woodyi (strain ATCC 51908 / MS32) protein is Transaldolase.